We begin with the raw amino-acid sequence, 380 residues long: Glucose-1-phosphate adenylyltransferase (380 aa).

Alpha-D-glucose 1-phosphate is bound by residues Gly164, 179–180 (EK), and Ser190.

Belongs to the bacterial/plant glucose-1-phosphate adenylyltransferase family. As to quaternary structure, homotetramer.

It catalyses the reaction alpha-D-glucose 1-phosphate + ATP + H(+) = ADP-alpha-D-glucose + diphosphate. The protein operates within glycan biosynthesis; glycogen biosynthesis. In terms of biological role, involved in the biosynthesis of ADP-glucose, a building block required for the elongation reactions to produce glycogen. Catalyzes the reaction between ATP and alpha-D-glucose 1-phosphate (G1P) to produce pyrophosphate and ADP-Glc. This chain is Glucose-1-phosphate adenylyltransferase, found in Streptococcus pneumoniae (strain Hungary19A-6).